A 348-amino-acid polypeptide reads, in one-letter code: Serpentine receptor class beta-7 (348 aa).

Helical transmembrane passes span 31 to 51 (QLIM…FQLL), 63 to 83 (LVGY…EAFI), 107 to 127 (GNLL…SITF), 145 to 165 (FLGP…ILLI), 191 to 211 (MFFI…FLLL), 241 to 261 (ISVI…TILL), and 280 to 300 (GAFM…SVYF).

This sequence belongs to the nematode receptor-like protein srb family.

Its subcellular location is the membrane. The sequence is that of Serpentine receptor class beta-7 (srb-7) from Caenorhabditis elegans.